A 135-amino-acid chain; its full sequence is Sex-regulated protein janus-A (135 aa).

Lys-37 serves as a coordination point for substrate. Catalysis depends on His-63, which acts as the Proton acceptor. 104 to 106 is a binding site for substrate; it reads SQG.

This sequence belongs to the janus family.

Its function is as follows. JanA and janB regulate somatic sex differentiation. The polypeptide is Sex-regulated protein janus-A (janA) (Drosophila mauritiana (Fruit fly)).